Consider the following 189-residue polypeptide: UPF0340 protein EF_1967 (189 aa).

This sequence belongs to the UPF0340 family.

This Enterococcus faecalis (strain ATCC 700802 / V583) protein is UPF0340 protein EF_1967.